We begin with the raw amino-acid sequence, 310 residues long: Zinc finger protein 42 homolog (310 aa).

A compositionally biased stretch (basic residues) spans 1–15 (MSQQLKKRAKTRHQK). Positions 1-35 (MSQQLKKRAKTRHQKGLGGRAPSGAKPRQGKSSQD) are disordered. 4 consecutive C2H2-type zinc fingers follow at residues 188 to 212 (IACP…LLIH), 217 to 239 (HVCA…FLVH), 245 to 269 (FRCT…VRIH), and 275 to 299 (FVCP…ILTH). Glycyl lysine isopeptide (Lys-Gly) (interchain with G-Cter in ubiquitin) cross-links involve residues K231 and K233.

Belongs to the krueppel C2H2-type zinc-finger protein family. Polyubiquitinated by RNF12, leading to proteasomal degradation. In terms of tissue distribution, expressed in kidney, epidermal keratinocytes, prostate epithelial cells, bronchial and small airway lung epithelial cells (at protein level). Expressed in malignant kidney and several carcinoma cell lines (at protein level). Expressed in embryonic stem cells, kidney, epidermal keratinocytes, prostate epithelial cells, bronchial and small airway lung epithelial cells. Expressed in embryonal carcinomas, seminomas, malignant kidney and several carcinoma cell lines.

Its subcellular location is the nucleus. Its function is as follows. Involved in the reprogramming of X-chromosome inactivation during the acquisition of pluripotency. Required for efficient elongation of TSIX, a non-coding RNA antisense to XIST. Binds DXPas34 enhancer within the TSIX promoter. Involved in ES cell self-renewal. The polypeptide is Zinc finger protein 42 homolog (ZFP42) (Homo sapiens (Human)).